A 1036-amino-acid polypeptide reads, in one-letter code: Zinc finger protein 532 (1036 aa).

Disordered regions lie at residues 26–92 (PKAA…LHNG), 106–206 (GAKS…EAES), 220–265 (RKAE…PSSK), and 281–362 (AASD…KVRI). Basic and acidic residues predominate over residues 32-52 (SGHDDHESHIKQNAHVDDDSH). Phosphoserine occurs at positions 130, 133, and 134. The span at 136–151 (EEFEDDEKIEVDDPPD) shows a compositional bias: acidic residues. K175 carries the N6-acetyllysine modification. Over residues 182-193 (ENSSKTGVSTSG) the composition is skewed to polar residues. Composition is skewed to basic and acidic residues over residues 194–205 (HTDKNKVKREAE) and 220–249 (RKAE…EKSD). The span at 253–265 (AAAASSKTKPSSK) shows a compositional bias: low complexity. Residues 302 to 314 (EVNDSPKAADKSP) are compositionally biased toward basic and acidic residues. Phosphoserine is present on residues S306 and S313. Residues 336–353 (SVSSENSSKGSPSSPVGS) are compositionally biased toward low complexity. Position 433 is a phosphoserine (S433). Residues K458 and K515 each participate in a glycyl lysine isopeptide (Lys-Gly) (interchain with G-Cter in SUMO2) cross-link. The C2H2-type 1; degenerate zinc-finger motif lies at 615-634 (YKCLECGDAFALEKSLSQHY). The C2H2-type 2; degenerate zinc-finger motif lies at 751 to 775 (LKCLECNEVFQDEPSLATHFQHAAD). A C2H2-type 3 zinc finger spans residues 784-807 (HPCRQCDKSFSSSHSLCRHNRIKH). The segment at 814-840 (YACSHCPDSRRTFTKRLMLERHIQLMH) adopts a C2H2-type 4; degenerate zinc-finger fold. Residues 847–877 (VKELSDDAGDVTNDEEEEAEIKEDAKVPSPK) are disordered. The span at 852 to 867 (DDAGDVTNDEEEEAEI) shows a compositional bias: acidic residues. Residues 868–877 (KEDAKVPSPK) are compositionally biased toward basic and acidic residues. S875 is modified (phosphoserine). Residues K879 and K902 each participate in a glycyl lysine isopeptide (Lys-Gly) (interchain with G-Cter in SUMO2) cross-link. 2 consecutive C2H2-type zinc fingers follow at residues 938 to 961 (HQCR…FIVH) and 999 to 1021 (RKCK…MRTH). The segment at 966–1000 (PQPVSKQNGAGEDSQQENKPSPEDEAAEGAASDRK) is disordered.

Belongs to the krueppel C2H2-type zinc-finger protein family.

The protein localises to the nucleus. In terms of biological role, may be involved in transcriptional regulation. The protein is Zinc finger protein 532 (Znf532) of Mus musculus (Mouse).